A 165-amino-acid chain; its full sequence is Nucleotide-binding protein Rcas_1283 (165 aa).

This sequence belongs to the YajQ family.

In terms of biological role, nucleotide-binding protein. This chain is Nucleotide-binding protein Rcas_1283, found in Roseiflexus castenholzii (strain DSM 13941 / HLO8).